A 359-amino-acid polypeptide reads, in one-letter code: 4'-phosphopantetheinyl transferase A (359 aa).

Belongs to the P-Pant transferase superfamily.

The enzyme catalyses apo-[ACP] + CoA = holo-[ACP] + adenosine 3',5'-bisphosphate + H(+). With respect to regulation, activity is inhibited bythe antifunfal copmpounds PD 404,182, 6-nitroso-1,2-benzopyrone, and calmidazolium chloride with IC(50) values of 3.9 uM, 35.2 uM, and 19.2 uM, respectively. Functionally, acyl-carrier-protein synthase that transfers the 4'-phosphopantetheine moiety from coenzyme A to a Ser of an acyl-carrier-protein. The 4'-phosphopantetheine (4'-PPT) portion of CoA provides the essential prosthetic group for a number of carrier proteins and multi-domain enzymes, priming them for the acceptance of acyl building blocks in fatty acid synthesis and many aspects of secondary metabolism mediated by polyketide synthases (PKSs) and non-ribosomal peptide synthetases (NRPSs). PptA is able to transfer the cofactor to a broad range of enzymes with acyl- or peptidyl-carrier protein domains and activates target enzymes involved in the synthesis of lysine, but also secondary metabolites including gliotoxin, fumigaclavine C, fumiquinazole A, fumiquinazoline C, pyripyroprene A, fumagillin, the siderophores triacetylfusarinine C (TAFC) and ferricrocin (FC), and dihydroxy naphthalene (DHN)-melanin. Plays an essential role in virulence. This is 4'-phosphopantetheinyl transferase A from Aspergillus fumigatus (strain ATCC MYA-4609 / CBS 101355 / FGSC A1100 / Af293) (Neosartorya fumigata).